Consider the following 61-residue polypeptide: Large ribosomal subunit protein bL32 (61 aa).

The segment covering 1–16 has biased composition (basic residues); that stretch reads MAVPRRKTSPSRRGMR. The disordered stretch occupies residues 1-61; that stretch reads MAVPRRKTSP…RQVLKAKSDS (61 aa). The span at 27 to 44 shows a compositional bias: basic and acidic residues; that stretch reads YAEDKDSGELRRPHHLDL.

Belongs to the bacterial ribosomal protein bL32 family.

The protein is Large ribosomal subunit protein bL32 of Nitrobacter winogradskyi (strain ATCC 25391 / DSM 10237 / CIP 104748 / NCIMB 11846 / Nb-255).